Here is a 114-residue protein sequence, read N- to C-terminus: Mediator of RNA polymerase II transcription subunit 11 (114 aa).

Residues 28 to 61 (LELSKEKANASLLDRQLNQFQTSINRVESELSSQ) are a coiled coil.

The protein belongs to the Mediator complex subunit 11 family. In terms of assembly, component of the Mediator complex. Ubiquitously expressed at early stage of development. After fertilization expressed in head region as well as in lateral line primordium.

It localises to the nucleus. In terms of biological role, component of the Mediator complex, a coactivator involved in the regulated transcription of nearly all RNA polymerase II-dependent genes. Mediator functions as a bridge to convey information from gene-specific regulatory proteins to the basal RNA polymerase II transcription machinery. Mediator is recruited to promoters by direct interactions with regulatory proteins and serves as a scaffold for the assembly of a functional pre-initiation complex with RNA polymerase II and the general transcription factors. In Danio rerio (Zebrafish), this protein is Mediator of RNA polymerase II transcription subunit 11 (med11).